Consider the following 582-residue polypeptide: 2-isopropylmalate synthase (582 aa).

Residues P40–D314 form the Pyruvate carboxyltransferase domain. Mg(2+) contacts are provided by D49, H253, H255, and N289. The regulatory domain stretch occupies residues S456 to D582.

Belongs to the alpha-IPM synthase/homocitrate synthase family. LeuA type 2 subfamily. Homodimer. Requires Mg(2+) as cofactor.

It is found in the cytoplasm. It carries out the reaction 3-methyl-2-oxobutanoate + acetyl-CoA + H2O = (2S)-2-isopropylmalate + CoA + H(+). Its pathway is amino-acid biosynthesis; L-leucine biosynthesis; L-leucine from 3-methyl-2-oxobutanoate: step 1/4. In terms of biological role, catalyzes the condensation of the acetyl group of acetyl-CoA with 3-methyl-2-oxobutanoate (2-ketoisovalerate) to form 3-carboxy-3-hydroxy-4-methylpentanoate (2-isopropylmalate). This is 2-isopropylmalate synthase from Renibacterium salmoninarum (strain ATCC 33209 / DSM 20767 / JCM 11484 / NBRC 15589 / NCIMB 2235).